A 273-amino-acid polypeptide reads, in one-letter code: Serine acetyltransferase (273 aa).

It belongs to the transferase hexapeptide repeat family. Homohexamer. Dimer of a homotrimer.

The protein resides in the cytoplasm. The catalysed reaction is L-serine + acetyl-CoA = O-acetyl-L-serine + CoA. Its pathway is amino-acid biosynthesis; L-cysteine biosynthesis; L-cysteine from L-serine: step 1/2. The protein is Serine acetyltransferase (cysE) of Shigella flexneri.